Reading from the N-terminus, the 385-residue chain is tRNA-specific 2-thiouridylase MnmA (385 aa).

ATP is bound by residues 29-36 (GLSGGVDS) and Leu-55. The active-site Nucleophile is Cys-116. A disulfide bridge links Cys-116 with Cys-225. Residue Gly-141 participates in ATP binding. The interval 175 to 177 (KDQ) is interaction with tRNA. The active-site Cysteine persulfide intermediate is the Cys-225. An interaction with tRNA region spans residues 330 to 331 (RY).

The protein belongs to the MnmA/TRMU family.

The protein resides in the cytoplasm. The enzyme catalyses S-sulfanyl-L-cysteinyl-[protein] + uridine(34) in tRNA + AH2 + ATP = 2-thiouridine(34) in tRNA + L-cysteinyl-[protein] + A + AMP + diphosphate + H(+). In terms of biological role, catalyzes the 2-thiolation of uridine at the wobble position (U34) of tRNA, leading to the formation of s(2)U34. In Prochlorococcus marinus (strain AS9601), this protein is tRNA-specific 2-thiouridylase MnmA.